Consider the following 354-residue polypeptide: Methylthioribose-1-phosphate isomerase (354 aa).

D246 acts as the Proton donor in catalysis.

This sequence belongs to the eIF-2B alpha/beta/delta subunits family. MtnA subfamily.

It localises to the cytoplasm. The protein resides in the nucleus. It catalyses the reaction 5-(methylsulfanyl)-alpha-D-ribose 1-phosphate = 5-(methylsulfanyl)-D-ribulose 1-phosphate. Its pathway is amino-acid biosynthesis; L-methionine biosynthesis via salvage pathway; L-methionine from S-methyl-5-thio-alpha-D-ribose 1-phosphate: step 1/6. Catalyzes the interconversion of methylthioribose-1-phosphate (MTR-1-P) into methylthioribulose-1-phosphate (MTRu-1-P). This is Methylthioribose-1-phosphate isomerase (mri1) from Xenopus laevis (African clawed frog).